A 61-amino-acid polypeptide reads, in one-letter code: Large ribosomal subunit protein bL32 (61 aa).

The disordered stretch occupies residues 1–20 (MAVQKSKPSRAKRGKRRSHD). Residues 7–19 (KPSRAKRGKRRSH) are compositionally biased toward basic residues.

It belongs to the bacterial ribosomal protein bL32 family.

The sequence is that of Large ribosomal subunit protein bL32 from Buchnera aphidicola subsp. Cinara cedri (strain Cc).